A 155-amino-acid polypeptide reads, in one-letter code: Small ribosomal subunit protein uS7c (155 aa).

Belongs to the universal ribosomal protein uS7 family. As to quaternary structure, part of the 30S ribosomal subunit.

Its subcellular location is the plastid. It is found in the chloroplast. Its function is as follows. One of the primary rRNA binding proteins, it binds directly to 16S rRNA where it nucleates assembly of the head domain of the 30S subunit. This Gunnera chilensis (Chilean rhubarb) protein is Small ribosomal subunit protein uS7c (rps7).